The chain runs to 928 residues: Probable outer membrane protein pmp11 (928 aa).

The N-terminal stretch at 1 to 24 is a signal peptide; that stretch reads MKTSIPWVLVSSVLAFSCHLQSLA. The Autotransporter domain occupies 627–928; it reads GMEHKQGFWV…NVDVGTKLRF (302 aa).

It belongs to the PMP outer membrane protein family.

It is found in the secreted. The protein resides in the cell wall. It localises to the cell outer membrane. The polypeptide is Probable outer membrane protein pmp11 (pmp11) (Chlamydia pneumoniae (Chlamydophila pneumoniae)).